The following is a 101-amino-acid chain: MAKESMKNRELKRQLTVAKYAKKRAELKAIIANPNSSAEERWNAQVALQKQPRDASASRLRNRCRLTGRPHGFYRKFGLSRNKLREAAMRGDVPGLVKASW.

It belongs to the universal ribosomal protein uS14 family. As to quaternary structure, part of the 30S ribosomal subunit. Contacts proteins S3 and S10.

In terms of biological role, binds 16S rRNA, required for the assembly of 30S particles and may also be responsible for determining the conformation of the 16S rRNA at the A site. The protein is Small ribosomal subunit protein uS14 of Pseudomonas aeruginosa (strain LESB58).